The sequence spans 90 residues: U-scoloptoxin(15)-Sa3a (90 aa).

Residues 1–18 form the signal peptide; it reads MKMVYLGLFLIITSCVIS.

Belongs to the scoloptoxin-15 family. Contains 3 disulfide bonds. In terms of tissue distribution, expressed by the venom gland.

It is found in the secreted. This Scolopendra alternans (Florida Keys giant centipede) protein is U-scoloptoxin(15)-Sa3a.